A 162-amino-acid polypeptide reads, in one-letter code: uncharacterized protein (162 aa).

The segment at 29-50 adopts a C2H2-type zinc-finger fold; that stretch reads CPFCDYTNADAKVVRKHVKSKH. The interval 60-93 is disordered; sequence KLESQKSKNNGKKQTGQKKQGKGKKQPKRVRETC. A compositionally biased stretch (basic residues) spans 68 to 87; the sequence is NNGKKQTGQKKQGKGKKQPK.

To M.jannaschii MJECS06.

This is an uncharacterized protein from Methanocaldococcus jannaschii (strain ATCC 43067 / DSM 2661 / JAL-1 / JCM 10045 / NBRC 100440) (Methanococcus jannaschii).